Here is a 503-residue protein sequence, read N- to C-terminus: Glutamate--tRNA ligase (503 aa).

A 'HIGH' region motif is present at residues 14–24 (PSPTGSLHIGG). Residues 261 to 265 (KLSKR) carry the 'KMSKS' region motif. Residue Lys-264 participates in ATP binding.

This sequence belongs to the class-I aminoacyl-tRNA synthetase family. Glutamate--tRNA ligase type 1 subfamily. In terms of assembly, monomer.

It is found in the cytoplasm. It carries out the reaction tRNA(Glu) + L-glutamate + ATP = L-glutamyl-tRNA(Glu) + AMP + diphosphate. Its function is as follows. Catalyzes the attachment of glutamate to tRNA(Glu) in a two-step reaction: glutamate is first activated by ATP to form Glu-AMP and then transferred to the acceptor end of tRNA(Glu). The chain is Glutamate--tRNA ligase from Chloroflexus aurantiacus (strain ATCC 29366 / DSM 635 / J-10-fl).